Reading from the N-terminus, the 237-residue chain is LexA repressor (237 aa).

A DNA-binding region (H-T-H motif) is located at residues 26–46 (FDEMKDALDLRSKSGIHRLIT). Active-site for autocatalytic cleavage activity residues include S158 and K196.

It belongs to the peptidase S24 family. Homodimer.

It carries out the reaction Hydrolysis of Ala-|-Gly bond in repressor LexA.. Functionally, represses a number of genes involved in the response to DNA damage (SOS response), including recA and lexA. In the presence of single-stranded DNA, RecA interacts with LexA causing an autocatalytic cleavage which disrupts the DNA-binding part of LexA, leading to derepression of the SOS regulon and eventually DNA repair. This is LexA repressor from Rhodopseudomonas palustris (strain BisB18).